We begin with the raw amino-acid sequence, 295 residues long: Movement protein BC1 (295 aa).

Belongs to the begomovirus movement protein BC1 family. Binds to dimeric supercoiled plasmid DNA. In terms of processing, phosphorylated.

The protein localises to the host cell membrane. The protein resides in the host microsome membrane. It is found in the host endoplasmic reticulum membrane. Functionally, transports viral genome to neighboring plant cells directly through plasmosdesmata, without any budding. The movement protein allows efficient cell to cell propagation, by bypassing the host cell wall barrier. Begomovirus genome is shuttled out of nucleus by Nuclear shuttle protein (NSP) and the movement protein transports the DNA-NSP complex to cell plasmodesmata and facilitates further movement across the cell wall. In Brassica oleracea (Wild cabbage), this protein is Movement protein BC1.